We begin with the raw amino-acid sequence, 438 residues long: Glutamyl-tRNA(Gln) amidotransferase subunit D (438 aa).

The Asparaginase/glutaminase domain occupies 92-422; that stretch reads PEVTIIGTGG…EEVRKMMLTN (331 aa). Residues Thr-102, Thr-178, Asp-179, and Lys-256 contribute to the active site.

It belongs to the asparaginase 1 family. GatD subfamily. In terms of assembly, heterodimer of GatD and GatE.

It catalyses the reaction L-glutamyl-tRNA(Gln) + L-glutamine + ATP + H2O = L-glutaminyl-tRNA(Gln) + L-glutamate + ADP + phosphate + H(+). In terms of biological role, allows the formation of correctly charged Gln-tRNA(Gln) through the transamidation of misacylated Glu-tRNA(Gln) in organisms which lack glutaminyl-tRNA synthetase. The reaction takes place in the presence of glutamine and ATP through an activated gamma-phospho-Glu-tRNA(Gln). The GatDE system is specific for glutamate and does not act on aspartate. The protein is Glutamyl-tRNA(Gln) amidotransferase subunit D of Pyrococcus abyssi (strain GE5 / Orsay).